The chain runs to 509 residues: tRNA (guanine(37)-N(1))-methyltransferase (509 aa).

The transit peptide at 1-57 (MVLWILWRPFGFSRRLLKLERHSITESKSLIPLAWTSLTQTLSESPGIFLLGQRKRF) directs the protein to the mitochondrion. Residues histidine 289, 327-328 (DL), 355-356 (DG), and asparagine 387 each bind S-adenosyl-L-methionine. The segment at 478–509 (TKNPENHEDPPLKRQRTAEAFSDEKTQIASNT) is disordered.

It belongs to the class I-like SAM-binding methyltransferase superfamily. TRM5/TYW2 family. Monomer.

Its subcellular location is the mitochondrion matrix. The protein localises to the nucleus. It is found in the cytoplasm. It carries out the reaction guanosine(37) in tRNA + S-adenosyl-L-methionine = N(1)-methylguanosine(37) in tRNA + S-adenosyl-L-homocysteine + H(+). Functionally, involved in mitochondrial tRNA methylation. Specifically methylates the N1 position of guanosine-37 in various tRNAs. Methylation is not dependent on the nature of the nucleoside 5' of the target nucleoside. This is the first step in the biosynthesis of wybutosine (yW), a modified base adjacent to the anticodon of tRNAs and required for accurate decoding. This Macaca fascicularis (Crab-eating macaque) protein is tRNA (guanine(37)-N(1))-methyltransferase.